A 428-amino-acid polypeptide reads, in one-letter code: 3-phosphoshikimate 1-carboxyvinyltransferase (428 aa).

The 3-phosphoshikimate site is built by lysine 19, serine 20, and arginine 24. Lysine 19 contacts phosphoenolpyruvate. Residues glycine 91 and arginine 119 each contribute to the phosphoenolpyruvate site. 3-phosphoshikimate is bound by residues serine 164, glutamine 166, aspartate 312, and lysine 339. Glutamine 166 contributes to the phosphoenolpyruvate binding site. Aspartate 312 functions as the Proton acceptor in the catalytic mechanism. Arginine 343 and arginine 386 together coordinate phosphoenolpyruvate.

Belongs to the EPSP synthase family. As to quaternary structure, monomer.

Its subcellular location is the cytoplasm. The enzyme catalyses 3-phosphoshikimate + phosphoenolpyruvate = 5-O-(1-carboxyvinyl)-3-phosphoshikimate + phosphate. Its pathway is metabolic intermediate biosynthesis; chorismate biosynthesis; chorismate from D-erythrose 4-phosphate and phosphoenolpyruvate: step 6/7. Catalyzes the transfer of the enolpyruvyl moiety of phosphoenolpyruvate (PEP) to the 5-hydroxyl of shikimate-3-phosphate (S3P) to produce enolpyruvyl shikimate-3-phosphate and inorganic phosphate. The protein is 3-phosphoshikimate 1-carboxyvinyltransferase of Bacillus licheniformis (strain ATCC 14580 / DSM 13 / JCM 2505 / CCUG 7422 / NBRC 12200 / NCIMB 9375 / NCTC 10341 / NRRL NRS-1264 / Gibson 46).